Here is a 527-residue protein sequence, read N- to C-terminus: Tubulin-specific chaperone E (527 aa).

An N-acetylserine modification is found at Ser2. One can recognise a CAP-Gly domain in the interval 27–71 (GVVPPVAGPWLGVEWDNPERGKHDGSHEGTVYFQCRHPTGGSFIR). LRR repeat units lie at residues 154–175 (NIRK…IHIA), 180–200 (HLEV…SVLT), 205–226 (ALKV…RCAM), 230–252 (GLEE…DVLQ), 253–274 (TVKL…YLIA), 278–299 (RLEQ…DAGI), and 308–329 (SLKY…NELD). In terms of domain architecture, LRRCT spans 342–384 (NPLTKEDKEAETARLLIIASIGQLKTLNKCEILPEERRRAELD). At Lys463 the chain carries N6-acetyllysine. A Phosphoserine modification is found at Ser495.

It belongs to the TBCE family. In terms of assembly, supercomplex made of cofactors A to E. Cofactors A and D function by capturing and stabilizing tubulin in a quasi-native conformation. Cofactor E binds to the cofactor D-tubulin complex; interaction with cofactor C then causes the release of tubulin polypeptides that are committed to the native state. Cofactors B and E can form a heterodimer which binds to alpha-tubulin and enhances their ability to dissociate tubulin heterodimers. Interacts with TBCD.

It localises to the cytoplasm. The protein resides in the cytoskeleton. In terms of biological role, tubulin-folding protein; involved in the second step of the tubulin folding pathway and in the regulation of tubulin heterodimer dissociation. Required for correct organization of microtubule cytoskeleton and mitotic splindle, and maintenance of the neuronal microtubule network. This is Tubulin-specific chaperone E (TBCE) from Pongo abelii (Sumatran orangutan).